Consider the following 381-residue polypeptide: Chaperone protein DnaJ (381 aa).

In terms of domain architecture, J spans 5 to 70; the sequence is DFYEVLGVSR…QKKAAYDQYG (66 aa). The CR-type zinc-finger motif lies at 136 to 214; it reads GVSKEIEVPT…CHGQGRKQKT (79 aa). Cysteine 149, cysteine 152, cysteine 166, cysteine 169, cysteine 188, cysteine 191, cysteine 202, and cysteine 205 together coordinate Zn(2+). 4 CXXCXGXG motif repeats span residues 149–156, 166–173, 188–195, and 202–209; these read CDTCEGTG, CGTCHGHG, CPTCHGKG, and CNVCHGQG.

The protein belongs to the DnaJ family. In terms of assembly, homodimer. The cofactor is Zn(2+).

The protein localises to the cytoplasm. In terms of biological role, participates actively in the response to hyperosmotic and heat shock by preventing the aggregation of stress-denatured proteins and by disaggregating proteins, also in an autonomous, DnaK-independent fashion. Unfolded proteins bind initially to DnaJ; upon interaction with the DnaJ-bound protein, DnaK hydrolyzes its bound ATP, resulting in the formation of a stable complex. GrpE releases ADP from DnaK; ATP binding to DnaK triggers the release of the substrate protein, thus completing the reaction cycle. Several rounds of ATP-dependent interactions between DnaJ, DnaK and GrpE are required for fully efficient folding. Also involved, together with DnaK and GrpE, in the DNA replication of plasmids through activation of initiation proteins. The sequence is that of Chaperone protein DnaJ from Vibrio vulnificus (strain CMCP6).